The primary structure comprises 315 residues: Gamma-hemolysin component C (315 aa).

Positions 1–29 (MLKNKILATTLSVSLLAPLANPLLENAKA) are cleaved as a signal peptide.

This sequence belongs to the aerolysin family. As to quaternary structure, toxicity requires sequential binding and synergistic association of a class S and a class F component which form heterooligomeric complexes. HlgC (class S) associates with HlgB (class F) thus forming an CB toxin.

In terms of biological role, toxin that seems to act by forming pores in the membrane of the cell. Has a hemolytic and a leucotoxic activity. This Staphylococcus aureus (strain MRSA252) protein is Gamma-hemolysin component C (hlgC).